Reading from the N-terminus, the 324-residue chain is Bile salt hydrolase/transferase (324 aa).

The active-site Nucleophile; acyl-thioester intermediate is the cysteine 2. Deoxycholate contacts are provided by cysteine 2 and arginine 16. Position 79 (asparagine 79) interacts with taurine.

Belongs to the peptidase C59 family. In terms of assembly, homotetramer. The tetramer consists of a dimer of dimers.

It carries out the reaction glycocholate + H2O = cholate + glycine. The enzyme catalyses glycodeoxycholate + H2O = deoxycholate + glycine. The catalysed reaction is chenodeoxycholate + glycine = glycochenodeoxycholate + H2O. It catalyses the reaction cholate + taurine = taurocholate + H2O. It carries out the reaction taurodeoxycholate + H2O = deoxycholate + taurine. The enzyme catalyses taurochenodeoxycholate + H2O = chenodeoxycholate + taurine. The catalysed reaction is an L-alpha-amino acid + cholate = an N-choloyl-L-alpha-amino acid + H2O. It catalyses the reaction an L-alpha-amino acid + taurocholate = an N-choloyl-L-alpha-amino acid + taurine. It carries out the reaction glycocholate + an L-alpha-amino acid = an N-choloyl-L-alpha-amino acid + glycine. It participates in lipid metabolism; bile acid biosynthesis. Functionally, possesses dual functions in bile acid metabolism. Acts as a bile salt hydrolase that catalyzes the deconjugation of glycine- and taurine-linked bile salts, which occurs naturally in the intestines of animals, releasing amino acid residues and deconjugated bile salts (bile acids). Can hydrolyze the amide bond in the bile salts glycocholate (GCA), glycodeoxycholate (GDCA), glycochenodeoxycholate (GCDCA), taurocholate (TCA), taurodeoxycholate (TDCA) and taurochenodeoxycholate (TCDCA). Shows a preference for glycine-conjugated bile acids as substrates. Also acts as an amine N-acyltransferase that conjugates a wide variety of amino acids to conjugated and non-conjugated bile acids, thus producing bacterial bile acid amidates (BBAAs) - also named microbially conjugated bile acids (MCBAs) - in the gastrointestinal tract. These BBAAs may facilitate communication between the microbiota and host through the activation of host ligand-activated transcription factors. The sequence is that of Bile salt hydrolase/transferase from Lactiplantibacillus plantarum (strain ATCC BAA-793 / NCIMB 8826 / WCFS1) (Lactobacillus plantarum).